A 203-amino-acid polypeptide reads, in one-letter code: MLTEQQRRELDWEKTDGLMPVIVQHAVSGEVLMLGYMNPEALDRTIESGKVTFFSRTKQRLWTKGETSGNFLNVVSIAPDCDNDTLLVLANPIGPTCHKGTSSCFGDTAHQWLFLYQLEQLLAERKSADPETSYTAKLYASGSKRIAQKVGEEGVETALAATVHDRFELTNEASDLMYHLLVLLQDQDLDLTTVIENLRKRHQ.

Positions 1 to 114 are phosphoribosyl-AMP cyclohydrolase; it reads MLTEQQRREL…FGDTAHQWLF (114 aa). A phosphoribosyl-ATP pyrophosphohydrolase region spans residues 115 to 203; it reads LYQLEQLLAE…VIENLRKRHQ (89 aa).

In the N-terminal section; belongs to the PRA-CH family. The protein in the C-terminal section; belongs to the PRA-PH family.

It localises to the cytoplasm. The enzyme catalyses 1-(5-phospho-beta-D-ribosyl)-ATP + H2O = 1-(5-phospho-beta-D-ribosyl)-5'-AMP + diphosphate + H(+). It catalyses the reaction 1-(5-phospho-beta-D-ribosyl)-5'-AMP + H2O = 1-(5-phospho-beta-D-ribosyl)-5-[(5-phospho-beta-D-ribosylamino)methylideneamino]imidazole-4-carboxamide. It participates in amino-acid biosynthesis; L-histidine biosynthesis; L-histidine from 5-phospho-alpha-D-ribose 1-diphosphate: step 2/9. It functions in the pathway amino-acid biosynthesis; L-histidine biosynthesis; L-histidine from 5-phospho-alpha-D-ribose 1-diphosphate: step 3/9. This Escherichia coli O6:H1 (strain CFT073 / ATCC 700928 / UPEC) protein is Histidine biosynthesis bifunctional protein HisIE.